Consider the following 492-residue polypeptide: ATP synthase subunit beta, chloroplastic (492 aa).

Position 170 to 177 (170 to 177 (GGAGVGKT)) interacts with ATP.

Belongs to the ATPase alpha/beta chains family. F-type ATPases have 2 components, CF(1) - the catalytic core - and CF(0) - the membrane proton channel. CF(1) has five subunits: alpha(3), beta(3), gamma(1), delta(1), epsilon(1). CF(0) has four main subunits: a(1), b(1), b'(1) and c(9-12).

The protein resides in the plastid. Its subcellular location is the chloroplast thylakoid membrane. It carries out the reaction ATP + H2O + 4 H(+)(in) = ADP + phosphate + 5 H(+)(out). Its function is as follows. Produces ATP from ADP in the presence of a proton gradient across the membrane. The catalytic sites are hosted primarily by the beta subunits. The sequence is that of ATP synthase subunit beta, chloroplastic from Psilotum nudum (Whisk fern).